A 370-amino-acid polypeptide reads, in one-letter code: Ig heavy chain C region (370 aa).

Ig-like domains are found at residues 40-134, 145-237, and 247-347; these read PTVI…RNIT, PAIK…DSIH, and PSVS…RTVN. 6 N-linked (GlcNAc...) asparagine glycosylation sites follow: Asn98, Asn132, Asn177, Asn343, Asn347, and Asn357.

In Heterodontus francisci (Horn shark), this protein is Ig heavy chain C region.